A 154-amino-acid chain; its full sequence is Large ribosomal subunit protein uL13 (154 aa).

Belongs to the universal ribosomal protein uL13 family. Part of the 50S ribosomal subunit.

In terms of biological role, this protein is one of the early assembly proteins of the 50S ribosomal subunit, although it is not seen to bind rRNA by itself. It is important during the early stages of 50S assembly. This is Large ribosomal subunit protein uL13 from Brucella suis (strain ATCC 23445 / NCTC 10510).